A 531-amino-acid chain; its full sequence is Light-independent protochlorophyllide reductase subunit B (531 aa).

Asp-36 contributes to the [4Fe-4S] cluster binding site. Asp-296 acts as the Proton donor in catalysis. 431–432 contacts substrate; the sequence is GM.

The protein belongs to the ChlB/BchB/BchZ family. As to quaternary structure, protochlorophyllide reductase is composed of three subunits; ChlL, ChlN and ChlB. Forms a heterotetramer of two ChlB and two ChlN subunits. [4Fe-4S] cluster serves as cofactor.

It is found in the plastid. The protein resides in the chloroplast. It carries out the reaction chlorophyllide a + oxidized 2[4Fe-4S]-[ferredoxin] + 2 ADP + 2 phosphate = protochlorophyllide a + reduced 2[4Fe-4S]-[ferredoxin] + 2 ATP + 2 H2O. Its pathway is porphyrin-containing compound metabolism; chlorophyll biosynthesis (light-independent). In terms of biological role, component of the dark-operative protochlorophyllide reductase (DPOR) that uses Mg-ATP and reduced ferredoxin to reduce ring D of protochlorophyllide (Pchlide) to form chlorophyllide a (Chlide). This reaction is light-independent. The NB-protein (ChlN-ChlB) is the catalytic component of the complex. This chain is Light-independent protochlorophyllide reductase subunit B, found in Nephroselmis olivacea (Green alga).